Here is a 207-residue protein sequence, read N- to C-terminus: ATP phosphoribosyltransferase (207 aa).

Belongs to the ATP phosphoribosyltransferase family. Short subfamily. Heteromultimer composed of HisG and HisZ subunits.

The protein localises to the cytoplasm. It carries out the reaction 1-(5-phospho-beta-D-ribosyl)-ATP + diphosphate = 5-phospho-alpha-D-ribose 1-diphosphate + ATP. The protein operates within amino-acid biosynthesis; L-histidine biosynthesis; L-histidine from 5-phospho-alpha-D-ribose 1-diphosphate: step 1/9. Its function is as follows. Catalyzes the condensation of ATP and 5-phosphoribose 1-diphosphate to form N'-(5'-phosphoribosyl)-ATP (PR-ATP). Has a crucial role in the pathway because the rate of histidine biosynthesis seems to be controlled primarily by regulation of HisG enzymatic activity. This Dictyoglomus thermophilum (strain ATCC 35947 / DSM 3960 / H-6-12) protein is ATP phosphoribosyltransferase.